A 381-amino-acid polypeptide reads, in one-letter code: MPFSNSHNTQKLRFPAEDEFPDLSSHNNHMAKVLTPELYAELRAKCTPSGFTLDDAIQTGVDNPGHPYIMTVGAVAGDEESYDVFKDLFDPIIEDRHGGYQPSDEHKTDLNPDNLQGGDDLDPNYVLSSRVRTGRSIRGFCLPPHCSRGERRAIEKLAVEALSSLDGDLSGRYYALKSMTEAEQQQLIDDHFLFDKPVSPLLLASGMARDWPDARGIWHNDNKTFLVWINEEDHLRVISMQKGGNMKEVFTRFCTGLTQIETLFKSKNYEFMWNPHLGYILTCPSNLGTGLRAGVHIKLPHLGKHEKFSEVLKRLRLQKRGTGGVDTAAVGGVFDVSNADRLGFSEVELVQMVVDGVKLLIEMEQRLEQGQPIDDLMPAQK.

Ser-4 is subject to Phosphoserine. In terms of domain architecture, Phosphagen kinase N-terminal spans 11 to 98; it reads KLRFPAEDEF…FDPIIEDRHG (88 aa). Residue Thr-35 is modified to Phosphothreonine. Lys-45 participates in a covalent cross-link: Glycyl lysine isopeptide (Lys-Gly) (interchain with G-Cter in ubiquitin). Position 72 (Val-72) interacts with creatine. A compositionally biased stretch (basic and acidic residues) spans 96–110; it reads RHGGYQPSDEHKTDL. Residues 96–122 are disordered; it reads RHGGYQPSDEHKTDLNPDNLQGGDDLD. A Glycyl lysine isopeptide (Lys-Gly) (interchain with G-Cter in ubiquitin) cross-link involves residue Lys-107. Phosphotyrosine is present on Tyr-125. Residues 125–367 form the Phosphagen kinase C-terminal domain; the sequence is YVLSSRVRTG…KLLIEMEQRL (243 aa). ATP contacts are provided by residues 128–132, Arg-130, Arg-132, and His-191; that span reads SSRVR. The segment at 130–138 is internal MTS-like signal; it reads RVRTGRSIR. Phosphoserine is present on Ser-199. Residue Glu-232 coordinates creatine. Arg-236 is a binding site for ATP. Tyr-269 is subject to 3'-nitrotyrosine. Creatine is bound at residue Ser-285. Arg-292 lines the ATP pocket. The residue at position 309 (Ser-309) is a Phosphoserine. ATP is bound by residues Arg-320, 320–325, and Asp-335; that span reads RGTGGV. A Phosphothreonine modification is found at Thr-322. Residue Lys-381 forms a Glycyl lysine isopeptide (Lys-Gly) (interchain with G-Cter in ubiquitin) linkage.

It belongs to the ATP:guanido phosphotransferase family. As to quaternary structure, dimer of identical or non-identical chains, which can be either B (brain type) or M (muscle type). With MM being the major form in skeletal muscle and myocardium, MB existing in myocardium, and BB existing in many tissues, especially brain. Interacts with SLC12A6 (via C-terminus); the interaction may be required for SLC12A6 potassium-chloride cotransport activity. Ubiquitinated by the ECS(ASB9) complex, leading to its degradation by the proteasome. As to expression, in the kidney localized primarily in the outer medulla in the thick ascending limb and distal convoluted tubule.

The protein resides in the cytoplasm. Its subcellular location is the cytosol. It localises to the mitochondrion. The protein localises to the cell membrane. It carries out the reaction creatine + ATP = N-phosphocreatine + ADP + H(+). Its function is as follows. Reversibly catalyzes the transfer of phosphate between ATP and various phosphogens (e.g. creatine phosphate). Creatine kinase isoenzymes play a central role in energy transduction in tissues with large, fluctuating energy demands, such as skeletal muscle, heart, brain and spermatozoa. Acts as a key regulator of adaptive thermogenesis as part of the futile creatine cycle: localizes to the mitochondria of thermogenic fat cells and acts by mediating phosphorylation of creatine to initiate a futile cycle of creatine phosphorylation and dephosphorylation. During the futile creatine cycle, creatine and N-phosphocreatine are in a futile cycle, which dissipates the high energy charge of N-phosphocreatine as heat without performing any mechanical or chemical work. This Rattus norvegicus (Rat) protein is Creatine kinase B-type (Ckb).